The primary structure comprises 59 residues: Large ribosomal subunit protein uL30 (59 aa).

The protein belongs to the universal ribosomal protein uL30 family. As to quaternary structure, part of the 50S ribosomal subunit.

The sequence is that of Large ribosomal subunit protein uL30 from Clostridium kluyveri (strain ATCC 8527 / DSM 555 / NBRC 12016 / NCIMB 10680 / K1).